A 92-amino-acid polypeptide reads, in one-letter code: Putative regulatory protein Tpet_0986 (92 aa).

Belongs to the RemA family.

The polypeptide is Putative regulatory protein Tpet_0986 (Thermotoga petrophila (strain ATCC BAA-488 / DSM 13995 / JCM 10881 / RKU-1)).